The chain runs to 227 residues: Cytochrome c oxidase subunit 2 (227 aa).

Residues 1 to 14 lie on the Mitochondrial intermembrane side of the membrane; the sequence is MAYPFQLGLQDATS. The helical transmembrane segment at 15–45 threads the bilayer; it reads PIMEELLHFHDHTLMIVFLISSLVLYIISLM. Residues 46–59 lie on the Mitochondrial matrix side of the membrane; it reads LTTKLTHTSTMDAQ. The helical transmembrane segment at 60 to 87 threads the bilayer; sequence EVETVWTILPAIILILIALPSLRILYMM. The Mitochondrial intermembrane segment spans residues 88–227; the sequence is DEINNPSLTV…YFETWSALMV (140 aa). Positions 161, 196, 198, 200, 204, and 207 each coordinate Cu cation. E198 serves as a coordination point for Mg(2+). Position 218 is a phosphotyrosine (Y218).

Belongs to the cytochrome c oxidase subunit 2 family. As to quaternary structure, component of the cytochrome c oxidase (complex IV, CIV), a multisubunit enzyme composed of 14 subunits. The complex is composed of a catalytic core of 3 subunits MT-CO1, MT-CO2 and MT-CO3, encoded in the mitochondrial DNA, and 11 supernumerary subunits COX4I, COX5A, COX5B, COX6A, COX6B, COX6C, COX7A, COX7B, COX7C, COX8 and NDUFA4, which are encoded in the nuclear genome. The complex exists as a monomer or a dimer and forms supercomplexes (SCs) in the inner mitochondrial membrane with NADH-ubiquinone oxidoreductase (complex I, CI) and ubiquinol-cytochrome c oxidoreductase (cytochrome b-c1 complex, complex III, CIII), resulting in different assemblies (supercomplex SCI(1)III(2)IV(1) and megacomplex MCI(2)III(2)IV(2)). Found in a complex with TMEM177, COA6, COX18, COX20, SCO1 and SCO2. Interacts with TMEM177 in a COX20-dependent manner. Interacts with COX20. Interacts with COX16. Cu cation is required as a cofactor.

The protein resides in the mitochondrion inner membrane. It catalyses the reaction 4 Fe(II)-[cytochrome c] + O2 + 8 H(+)(in) = 4 Fe(III)-[cytochrome c] + 2 H2O + 4 H(+)(out). In terms of biological role, component of the cytochrome c oxidase, the last enzyme in the mitochondrial electron transport chain which drives oxidative phosphorylation. The respiratory chain contains 3 multisubunit complexes succinate dehydrogenase (complex II, CII), ubiquinol-cytochrome c oxidoreductase (cytochrome b-c1 complex, complex III, CIII) and cytochrome c oxidase (complex IV, CIV), that cooperate to transfer electrons derived from NADH and succinate to molecular oxygen, creating an electrochemical gradient over the inner membrane that drives transmembrane transport and the ATP synthase. Cytochrome c oxidase is the component of the respiratory chain that catalyzes the reduction of oxygen to water. Electrons originating from reduced cytochrome c in the intermembrane space (IMS) are transferred via the dinuclear copper A center (CU(A)) of subunit 2 and heme A of subunit 1 to the active site in subunit 1, a binuclear center (BNC) formed by heme A3 and copper B (CU(B)). The BNC reduces molecular oxygen to 2 water molecules using 4 electrons from cytochrome c in the IMS and 4 protons from the mitochondrial matrix. The polypeptide is Cytochrome c oxidase subunit 2 (MT-CO2) (Urocyon cinereoargenteus (Gray fox)).